We begin with the raw amino-acid sequence, 301 residues long: MRYFKEEVAGMKYGIYFAYWTKEWFADYKKYMDKVSALGFDVLEISCAALRDVYTTKEQLIELREYAKEKGLVLTAGYGPTKAENLCSEDPEAVRRAMTFFKDLLPKLQLMDIHILGGGLYSYWPVDFTINNDKQGDRARAVRNLRELSKTAEECDVVLGMEVLNRYEGYILNTCEEAIDFVDEIGSSHVKIMLDTFHMNIEETNMADAIRKAGDRLGHLHLGEQNRLVPGKGSLPWAEIGQALRDINYQGAAVMEPFVMQGGTIGSEIKVWRDMVPDLSEEALDRDAKGALEFCRHVFGI.

Y16 contributes to the substrate binding site. The active-site Proton donor/acceptor is the E162. Residue E162 coordinates Mn(2+). Substrate is bound by residues E168 and 195–198 (DTFH). Mn(2+) is bound by residues D195 and H221. Residue R227 participates in substrate binding. The active-site Proton donor/acceptor is E256. E256 lines the Mn(2+) pocket.

It belongs to the hyi family. Homotetramer. The cofactor is Mn(2+). Co(2+) serves as cofactor.

The catalysed reaction is D-allulose = keto-D-fructose. Its activity is regulated as follows. Completely inhibited by EDTA and partially inhibited by Zn(2+), Mg(2+) and Cu(2+). Its function is as follows. Involved in the biosynthesis of D-psicose. Catalyzes the reversible epimerization of D-fructose at the C3 position to yield D-psicose. The enzyme is highly specific for D-psicose and shows very low activity with D-tagatose. The polypeptide is D-psicose 3-epimerase (Enterocloster bolteae (strain ATCC BAA-613 / DSM 15670 / CCUG 46953 / JCM 12243 / WAL 16351) (Clostridium bolteae)).